The chain runs to 1238 residues: Multifunctional 2-oxoglutarate metabolism enzyme (1238 aa).

Residues 1-41 are 2-oxoglutarate dehydrogenase E1, N-terminal part; it reads MANISSPFGQNEWLVEEMYRKFRDDPSSVDPSWHEFLVDYN. The segment at 42 to 97 is linker; it reads PESTAEPVLTDPTSTDKQPSATPQAKPAAAADPVASRAKPATTPTVANGTAAGSAA. The interval 44–108 is disordered; sequence STAEPVLTDP…PAKTTTTPPI (65 aa). The span at 59-107 shows a compositional bias: low complexity; that stretch reads QPSATPQAKPAAAADPVASRAKPATTPTVANGTAAGSAAAPAKTTTTPP. Residues 98–346 form a succinyltransferase E2 region; that stretch reads APAKTTTTPP…LRTIHEMVLS (249 aa). His325 functions as the Proton acceptor; for succinyltransferase activity in the catalytic mechanism. Positions 347–1238 are 2-oxoglutarate dehydrogenase E1, C-terminal part; it reads DSFWDEIFRE…QQEILDTAFG (892 aa). Arg551 contacts thiamine diphosphate. 2-oxoglutarate contacts are provided by His590 and Ser615. Thiamine diphosphate-binding residues include Ser615, Leu617, Asp657, Ala658, Ala659, and Asn690. Mg(2+) is bound at residue Asp657. Mg(2+)-binding residues include Asn690 and Ile692. Residues 795-825 are a coiled coil; that stretch reads DISLKEAEDALRDYQGQLERVFNEVRDLEKH. Residue His1032 coordinates 2-oxoglutarate. Acetyl-CoA is bound by residues Thr1050, Arg1066, Lys1101, Ser1104, Gln1154, Arg1161, and Arg1162.

The protein belongs to the 2-oxoacid dehydrogenase family. Kgd subfamily. As to quaternary structure, homodimer. The 2-oxoglutarate dehydrogenase (ODH) complex contains multiple copies of three enzymatic components: 2-oxoglutarate dehydrogenase (E1), dihydrolipoamide succinyltransferase (E2) and lipoamide dehydrogenase (E3). Mg(2+) is required as a cofactor. The cofactor is thiamine diphosphate.

It catalyses the reaction glyoxylate + 2-oxoglutarate + H(+) = 2-hydroxy-3-oxoadipate + CO2. It carries out the reaction 2-oxoglutarate + H(+) = succinate semialdehyde + CO2. The catalysed reaction is N(6)-[(R)-lipoyl]-L-lysyl-[protein] + 2-oxoglutarate + H(+) = N(6)-[(R)-S(8)-succinyldihydrolipoyl]-L-lysyl-[protein] + CO2. The enzyme catalyses N(6)-[(R)-dihydrolipoyl]-L-lysyl-[protein] + succinyl-CoA = N(6)-[(R)-S(8)-succinyldihydrolipoyl]-L-lysyl-[protein] + CoA. Its pathway is carbohydrate metabolism; tricarboxylic acid cycle; succinate from 2-oxoglutarate (transferase route): step 1/2. It participates in carbohydrate metabolism; tricarboxylic acid cycle; succinyl-CoA from 2-oxoglutarate (dehydrogenase route): step 1/1. Its activity is regulated as follows. Alpha-ketoglutarate dehydrogenase and decarboxylase activities are inhibited by unphosphorylated GarA, and allosterically activated by acetyl-CoA, the main substrate of the TCA cycle. Its function is as follows. Shows three enzymatic activities that share a first common step, the attack of thiamine-PP on 2-oxoglutarate (alpha-ketoglutarate, KG), leading to the formation of an enamine-thiamine-PP intermediate upon decarboxylation. Thus, displays KGD activity, catalyzing the decarboxylation from five-carbon 2-oxoglutarate to four-carbon succinate semialdehyde (SSA). Also catalyzes C-C bond formation between the activated aldehyde formed after decarboxylation of alpha-ketoglutarate and the carbonyl of glyoxylate (GLX), to yield 2-hydroxy-3-oxoadipate (HOA), which spontaneously decarboxylates to form 5-hydroxylevulinate (HLA). And is also a component of the 2-oxoglutarate dehydrogenase (ODH) complex, that catalyzes the overall conversion of 2-oxoglutarate to succinyl-CoA and CO(2). The KG decarboxylase and KG dehydrogenase reactions provide two alternative, tightly regulated, pathways connecting the oxidative and reductive branches of the TCA cycle. This Mycobacterium leprae (strain TN) protein is Multifunctional 2-oxoglutarate metabolism enzyme (kgd).